The sequence spans 462 residues: NEDD8-activating enzyme E1 regulatory subunit (462 aa).

It belongs to the ubiquitin-activating E1 family. ULA1 subfamily. In terms of assembly, heterodimer of UBA3 and ULA1. The complex binds NEDD8 and UBC12.

It functions in the pathway protein modification; protein neddylation. Functionally, regulatory subunit of the dimeric UBA3-ULA1 E1 enzyme. E1 activates NEDD8/RUB1 by first adenylating its C-terminal glycine residue with ATP, thereafter linking this residue to the side chain of the catalytic cysteine, yielding a NEDD8-UBA3 thioester and free AMP. E1 finally transfers NEDD8 to the catalytic cysteine of UBC12. This Saccharomyces cerevisiae (strain ATCC 204508 / S288c) (Baker's yeast) protein is NEDD8-activating enzyme E1 regulatory subunit (ULA1).